Reading from the N-terminus, the 622-residue chain is Interleukin-1 receptor-associated kinase-like 2 (622 aa).

The Death domain maps to 13 to 94; that stretch reads LDDLCRNIDT…RAAQIVLSWK (82 aa). One can recognise a Protein kinase domain in the interval 208 to 473; that stretch reads FDQSHRISEG…LPEACEEAWA (266 aa). ATP-binding positions include 214-222, K235, and 335-338; these read ISEGTFADI and KSAN. Disordered stretches follow at residues 511 to 532 and 553 to 591; these read RVSE…VDNS and LFTG…ETSW. Composition is skewed to polar residues over residues 513–523 and 561–590; these read SEATGSSSNTP and QPST…TETS.

Belongs to the protein kinase superfamily. TKL Ser/Thr protein kinase family. Pelle subfamily. As to quaternary structure, interacts with MYD88. IL-1 stimulation leads to the formation of a signaling complex which dissociates from the IL-1 receptor following the binding of PELI1. As to expression, ubiquitously expressed, with a higher expression observed in brain, spleen and liver. Isoform 1 and isoform 2 are considered agonist and isoform 3 and isoform 4 are considered antagonist.

Functionally, binds to the IL-1 type I receptor following IL-1 engagement, triggering intracellular signaling cascades leading to transcriptional up-regulation and mRNA stabilization. In Mus musculus (Mouse), this protein is Interleukin-1 receptor-associated kinase-like 2 (Irak2).